Here is a 302-residue protein sequence, read N- to C-terminus: NADH-cytochrome b5 reductase 2 (302 aa).

The propeptide at 1–41 (MFSRLSRSHSKALPIALGTVAIAAATAFYFANRNQHSFVFN) is removed in mature form. Residues 12–32 (ALPIALGTVAIAAATAFYFAN) traverse the membrane as a helical segment. The FAD-binding FR-type domain maps to 51-155 (DKWIDLPISK…KGPIMKWKWQ (105 aa)). 158-193 (QFKSITLLGAGTGINPLYQLAHHIVENPNDKTKVNL) contributes to the FAD binding site. Residue Ser-278 is modified to Phosphoserine.

Belongs to the flavoprotein pyridine nucleotide cytochrome reductase family. FAD serves as cofactor. Post-translationally, there are two isoforms of NADH-cytochrome b5 reductase, a 34 kDa form (p34) and a 32 kDa form (p32). The p34 form becomes firmly anchored to the outer mitochondrial membrane after an incomplete translocation arrest. The p32 form is formed after translocation of the p34 precursor to the inner mitochondrial membrane, where it is processed by mitochondrial inner membrane peptidase (IMP) complex and released to the intermembrane space.

The protein resides in the mitochondrion intermembrane space. It localises to the mitochondrion outer membrane. The catalysed reaction is 2 Fe(III)-[cytochrome b5] + NADH = 2 Fe(II)-[cytochrome b5] + NAD(+) + H(+). Functionally, the outer membrane form may mediate the reduction of outer membrane cytochrome b5, and the soluble inter-membrane space form may transfer electrons from external NADH to cytochrome c, thereby mediating an antimycin-insensitive, energy-coupled oxidation of external NADH by yeast mitochondria. Involved in the reduction of D-erythroascorbyl free radicals. The chain is NADH-cytochrome b5 reductase 2 (MCR1) from Saccharomyces cerevisiae (strain YJM789) (Baker's yeast).